The primary structure comprises 151 residues: UPF0178 protein GSU0171 (151 aa).

Belongs to the UPF0178 family.

The chain is UPF0178 protein GSU0171 from Geobacter sulfurreducens (strain ATCC 51573 / DSM 12127 / PCA).